The chain runs to 353 residues: Basic membrane protein C (353 aa).

A signal peptide spans 1-16 (MFKRFIFITLSLLVFA). The N-palmitoyl cysteine moiety is linked to residue Cys17. A lipid anchor (S-diacylglycerol cysteine) is attached at Cys17.

This sequence belongs to the BMP lipoprotein family. Monomer.

The protein localises to the cell inner membrane. May be part of an ABC-type nucleoside uptake system involved in the purine salvage pathway. The protein is Basic membrane protein C (bmpC) of Borreliella burgdorferi (strain N40) (Borrelia burgdorferi).